Here is a 130-residue protein sequence, read N- to C-terminus: Large ribosomal subunit protein bL12 (130 aa).

It belongs to the bacterial ribosomal protein bL12 family. Homodimer. Part of the ribosomal stalk of the 50S ribosomal subunit. Forms a multimeric L10(L12)X complex, where L10 forms an elongated spine to which 2 to 4 L12 dimers bind in a sequential fashion. Binds GTP-bound translation factors.

Functionally, forms part of the ribosomal stalk which helps the ribosome interact with GTP-bound translation factors. Is thus essential for accurate translation. This Mycolicibacterium vanbaalenii (strain DSM 7251 / JCM 13017 / BCRC 16820 / KCTC 9966 / NRRL B-24157 / PYR-1) (Mycobacterium vanbaalenii) protein is Large ribosomal subunit protein bL12.